Reading from the N-terminus, the 144-residue chain is Large ribosomal subunit protein uL15 (144 aa).

Residues 1 to 54 (MRLNTLSPAEGSKKAGKRLGRGIGSGLGKTGGRGHKGQKSRSGGGVRRGFEGGQ) are disordered. The span at 21-31 (RGIGSGLGKTG) shows a compositional bias: gly residues.

It belongs to the universal ribosomal protein uL15 family. In terms of assembly, part of the 50S ribosomal subunit.

Functionally, binds to the 23S rRNA. The protein is Large ribosomal subunit protein uL15 of Klebsiella pneumoniae (strain 342).